A 148-amino-acid chain; its full sequence is Deoxyuridine 5'-triphosphate nucleotidohydrolase (148 aa).

Residues 67–69 (RSG), Asn-80, 84–86 (LID), and Met-94 contribute to the substrate site.

The protein belongs to the dUTPase family. The cofactor is Mg(2+).

It catalyses the reaction dUTP + H2O = dUMP + diphosphate + H(+). The protein operates within pyrimidine metabolism; dUMP biosynthesis; dUMP from dCTP (dUTP route): step 2/2. Functionally, this enzyme is involved in nucleotide metabolism: it produces dUMP, the immediate precursor of thymidine nucleotides and it decreases the intracellular concentration of dUTP so that uracil cannot be incorporated into DNA. This is Deoxyuridine 5'-triphosphate nucleotidohydrolase from Francisella philomiragia subsp. philomiragia (strain ATCC 25017 / CCUG 19701 / FSC 153 / O#319-036).